Reading from the N-terminus, the 353-residue chain is Endophilin-A1 (353 aa).

A membrane-binding amphipathic helix region spans residues 1–21; sequence MSVAGLKKQFHKATQKVSEKV. The tract at residues 1-27 is disordered; that stretch reads MSVAGLKKQFHKATQKVSEKVGGAEGT. Positions 1 to 125 are binds and tubulates liposomes; that stretch reads MSVAGLKKQF…DVGEAMKELS (125 aa). The BAR domain maps to 18-249; that stretch reads SEKVGGAEGT…LEDRIKEASS (232 aa). Positions 60-87 are required for dimerization upon membrane association; the sequence is PNPASRAKLSMINTMSKIRGQEKGPGYP. Positions 181 to 201 form a coiled coil; it reads EELRQALEKFDESKEIAESSM. The segment covering 243–257 has biased composition (basic and acidic residues); the sequence is RIKEASSQPKREYQP. The segment at 243 to 290 is disordered; sequence RIKEASSQPKREYQPKPRMSLDFTSGGDNTQHNGGISHATTPKPAGAH. Polar residues predominate over residues 264 to 282; that stretch reads DFTSGGDNTQHNGGISHAT. The region spanning 291–350 is the SH3 domain; the sequence is MDQPCCRALYDFEPENEGELGFKEGDIITLTNQIDENWYEGMLHGQSGFFPINYVDILVP.

It belongs to the endophilin family. Monomer; in cytoplasm. Homodimer; when associated with membranes. Associates with MAP4K3. This interaction appears to regulate MAP4K3-mediated JNK activation. Interacts with SYNJ1 and DNM1. In terms of tissue distribution, highly expressed in brain.

Its subcellular location is the cytoplasm. The protein localises to the membrane. It is found in the early endosome. It localises to the presynapse. Functionally, implicated in synaptic vesicle endocytosis. May recruit other proteins to membranes with high curvature. In Gallus gallus (Chicken), this protein is Endophilin-A1.